An 853-amino-acid chain; its full sequence is Ion channel CASTOR (853 aa).

The segment covering 1-30 has biased composition (low complexity); the sequence is MSLDSEVSVSSSSGRDWFFPSPSFFRSSPS. The segment at 1 to 55 is disordered; sequence MSLDSEVSVSSSSGRDWFFPSPSFFRSSPSQYGRRFHTNSNTHSAPSSTYPSGIR. Over residues 38-51 the composition is skewed to polar residues; the sequence is TNSNTHSAPSSTYP. The helical transmembrane segment at 96-116 threads the bilayer; sequence QFGLQFALVTLTIVFLLLLLL. The stretch at 117–137 forms a coiled coil; sequence RNTHLESQVNKLQGEILRLHA. A run of 3 helical transmembrane segments spans residues 168–188, 227–247, and 279–299; these read NLAL…FKYI, LVLL…LFGV, and LVAV…LGLV. RCK N-terminal domains lie at 320–461 and 580–752; these read QNHT…ETVV and PERI…DYVL.

Belongs to the castor/pollux (TC 1.A.1.23) family. In terms of assembly, homooligomer. In terms of tissue distribution, expressed in infected and uninfected roots, leaves, seed pods, and flower buds.

It is found in the nucleus membrane. Functionally, ion channel with a moderate preference for potassium over sodium and calcium. Involved in perinuclear calcium spiking but not in cytosolic calcium influx. Closed at negative voltages in presence of magnesium. Required for early signal transduction events leading to endosymbiosis. Acts early in a signal transduction chain leading from the perception of Nod factor to the activation of calcium spiking. Also involved in fungal entry into root epidermal cells during the establishment of the arbuscular mycorrhizal symbiosis. The chain is Ion channel CASTOR (CASTOR) from Lotus japonicus (Lotus corniculatus var. japonicus).